The primary structure comprises 285 residues: Pantothenate synthetase (285 aa).

30-37 (MGNLHDGH) lines the ATP pocket. H37 acts as the Proton donor in catalysis. Q61 serves as a coordination point for (R)-pantoate. A beta-alanine-binding site is contributed by Q61. Position 149 to 152 (149 to 152 (GEKD)) interacts with ATP. Q155 is a binding site for (R)-pantoate. Residues I178 and 186-189 (LSSR) each bind ATP.

The protein belongs to the pantothenate synthetase family. As to quaternary structure, homodimer.

Its subcellular location is the cytoplasm. It catalyses the reaction (R)-pantoate + beta-alanine + ATP = (R)-pantothenate + AMP + diphosphate + H(+). Its pathway is cofactor biosynthesis; (R)-pantothenate biosynthesis; (R)-pantothenate from (R)-pantoate and beta-alanine: step 1/1. Its function is as follows. Catalyzes the condensation of pantoate with beta-alanine in an ATP-dependent reaction via a pantoyl-adenylate intermediate. This is Pantothenate synthetase from Buchnera aphidicola subsp. Acyrthosiphon pisum (strain 5A).